Here is a 177-residue protein sequence, read N- to C-terminus: Large ribosomal subunit protein uL10 (177 aa).

The protein belongs to the universal ribosomal protein uL10 family. Part of the ribosomal stalk of the 50S ribosomal subunit. The N-terminus interacts with L11 and the large rRNA to form the base of the stalk. The C-terminus forms an elongated spine to which L12 dimers bind in a sequential fashion forming a multimeric L10(L12)X complex.

Forms part of the ribosomal stalk, playing a central role in the interaction of the ribosome with GTP-bound translation factors. The polypeptide is Large ribosomal subunit protein uL10 (Mycobacterium leprae (strain Br4923)).